A 276-amino-acid chain; its full sequence is N-acyl homoserine lactonase AiiB (276 aa).

6 residues coordinate Zn(2+): His111, His113, His116, His191, Asp213, and His259.

This sequence belongs to the metallo-beta-lactamase superfamily. Zn(2+) serves as cofactor.

The enzyme catalyses an N-acyl-L-homoserine lactone + H2O = an N-acyl-L-homoserine + H(+). The polypeptide is N-acyl homoserine lactonase AiiB (Rhizobium rhizogenes (strain K84 / ATCC BAA-868) (Agrobacterium radiobacter)).